Here is a 504-residue protein sequence, read N- to C-terminus: Peptidyl-prolyl cis-trans isomerase CYP57 (504 aa).

Ser-2 carries the post-translational modification N-acetylserine. The 152-residue stretch at 16 to 167 (IVNTTHGPID…DPAPKILSVE (152 aa)) folds into the PPIase cyclophilin-type domain. Residues 204-274 (NLLSFGEEAE…AKKEAAQKDK (71 aa)) are a coiled coil. Composition is skewed to basic and acidic residues over residues 237–275 (RLLKAEASDKERNASESKEVLSVREALNAKKEAAQKDKS), 344–354 (EDEKPRMEKLS), and 364–374 (AKAEHMEKGDT). Disordered stretches follow at residues 237 to 374 (RLLK…KGDT), 416 to 441 (AKPFTSSNEPVVLTSSSEPVDNKEED), and 482 to 504 (EKFNRMQAKQKRREREWSGKSLA). Over residues 416 to 434 (AKPFTSSNEPVVLTSSSEP) the composition is skewed to polar residues. The segment covering 494-504 (REREWSGKSLA) has biased composition (basic and acidic residues).

This sequence belongs to the cyclophilin-type PPIase family. Ubiquitous.

The protein resides in the nucleus. It is found in the cytoplasm. It carries out the reaction [protein]-peptidylproline (omega=180) = [protein]-peptidylproline (omega=0). In terms of biological role, PPIases accelerate the folding of proteins. It catalyzes the cis-trans isomerization of proline imidic peptide bonds in oligopeptides. Involved in plant response to pathogen infection by increasing PAD4 expression in absence of EDS1 up-regulation. This chain is Peptidyl-prolyl cis-trans isomerase CYP57 (CYP57), found in Arabidopsis thaliana (Mouse-ear cress).